Here is a 407-residue protein sequence, read N- to C-terminus: Argininosuccinate synthase (407 aa).

Residues 16 to 24 (AYSGGLDTS) and Ala-44 contribute to the ATP site. The L-citrulline site is built by Tyr-96 and Ser-101. Gly-126 serves as a coordination point for ATP. Residues Thr-128, Asn-132, and Asp-133 each coordinate L-aspartate. Asn-132 contributes to the L-citrulline binding site. L-citrulline-binding residues include Arg-136, Ser-185, Ser-194, Glu-270, and Tyr-282.

It belongs to the argininosuccinate synthase family. Type 1 subfamily. As to quaternary structure, homotetramer.

The protein localises to the cytoplasm. It carries out the reaction L-citrulline + L-aspartate + ATP = 2-(N(omega)-L-arginino)succinate + AMP + diphosphate + H(+). It functions in the pathway amino-acid biosynthesis; L-arginine biosynthesis; L-arginine from L-ornithine and carbamoyl phosphate: step 2/3. The chain is Argininosuccinate synthase from Shewanella loihica (strain ATCC BAA-1088 / PV-4).